Here is a 311-residue protein sequence, read N- to C-terminus: Homoserine kinase (311 aa).

88–98 lines the ATP pocket; sequence PEGLGLGSSGA.

This sequence belongs to the GHMP kinase family. Homoserine kinase subfamily.

The protein resides in the cytoplasm. It catalyses the reaction L-homoserine + ATP = O-phospho-L-homoserine + ADP + H(+). Its pathway is amino-acid biosynthesis; L-threonine biosynthesis; L-threonine from L-aspartate: step 4/5. Catalyzes the ATP-dependent phosphorylation of L-homoserine to L-homoserine phosphate. The protein is Homoserine kinase of Saccharolobus islandicus (strain L.S.2.15 / Lassen #1) (Sulfolobus islandicus).